A 172-amino-acid polypeptide reads, in one-letter code: Bifunctional protein PyrR (172 aa).

Positions 93–105 match the PRPP-binding motif; the sequence is VILIDDVLYTGRT.

Belongs to the purine/pyrimidine phosphoribosyltransferase family. PyrR subfamily. In terms of assembly, homodimer and homohexamer; in equilibrium.

It carries out the reaction UMP + diphosphate = 5-phospho-alpha-D-ribose 1-diphosphate + uracil. Its function is as follows. Regulates transcriptional attenuation of the pyrimidine nucleotide (pyr) operon by binding in a uridine-dependent manner to specific sites on pyr mRNA. This disrupts an antiterminator hairpin in the RNA and favors formation of a downstream transcription terminator, leading to a reduced expression of downstream genes. Functionally, also displays a weak uracil phosphoribosyltransferase activity which is not physiologically significant. This chain is Bifunctional protein PyrR, found in Streptococcus sanguinis (strain SK36).